The following is a 516-amino-acid chain: MASDGARKQFWKRSNSKVPGSIQHVYGAQHPPFDPLLHGTLLKSTPKVPTTPVKAKRVSTFQEFESNTSDAWDAGEDDDELLAMATESLNSEVVMETAHRVLRNHSQRQSQPSQKTTEPEPEPQPIAEPPVPPSGDLRLVKSVSESHTPCPSESTGDTVPLQRSQSLPHSATVTLSGTSDPHALADSALSKRETSRLDKFKQLLAGPNTDLEELRKLSWSGIPKPVRPMTWKLLSGYLPANVDRRPATLQRKQKEYFAFIEHYYSSRNDEVHQDTYRQIHIDIPRMSPEALILQPKVTEIFERILFIWAIRHPASGYVQGINDLVTPFFVVFICEYTDREDVDKVDVSSVPAEVLRNIEADTYWCMSKLLDGIQDNYTFAQPGIQMKVKMLEELVSRIDERVHRHLDGHEVRYLQFAFRWMNNLLMRELPLRCTIRLWDTYQSEPEGFSHFHLYVCAAFLVRWRREILEERDFQELLLFLQNLPTARWDDQDVSLLLAEAYRLKFAFADAPNHYKK.

Position 2 is an N-acetylalanine (alanine 2). 2 disordered regions span residues 63 to 88 and 102 to 186; these read EFESNTSDAWDAGEDDDELLAMATES and LRNH…ALAD. Polar residues predominate over residues 107 to 116; sequence QRQSQPSQKT. Residues 122–133 show a composition bias toward pro residues; it reads EPQPIAEPPVPP. Over residues 143–179 the composition is skewed to polar residues; the sequence is VSESHTPCPSESTGDTVPLQRSQSLPHSATVTLSGTS. 2 positions are modified to phosphoserine: serine 144 and serine 166. Positions 221–445 constitute a Rab-GAP TBC domain; the sequence is GIPKPVRPMT…RLWDTYQSEP (225 aa).

Homodimer. Interacts with ACBD3 and ARFGEF1. Interacts with YWHAB, YWHAE, YWHAG, YWHAH, YWHAQ and YWHAZ.

Its function is as follows. May act as a GTPase-activating protein for Rab family protein(s). In Mus musculus (Mouse), this protein is TBC1 domain family member 22A (Tbc1d22a).